The primary structure comprises 218 residues: Glutathione S-transferase Mu 5 (218 aa).

Positions 2-88 (PMTLGYWDIR…YIARKHNLCG (87 aa)) constitute a GST N-terminal domain. Residues 7–8 (YW), 46–50 (WLNEK), 59–60 (NL), and 72–73 (QS) contribute to the glutathione site. In terms of domain architecture, GST C-terminal spans 90–207 (TEEEKIRVDI…MKSSQFLRGL (118 aa)). Tyr116 provides a ligand contact to substrate.

Belongs to the GST superfamily. Mu family. In terms of assembly, homodimer.

It localises to the cytoplasm. The catalysed reaction is RX + glutathione = an S-substituted glutathione + a halide anion + H(+). Functionally, conjugation of reduced glutathione to a wide number of exogenous and endogenous hydrophobic electrophiles. The chain is Glutathione S-transferase Mu 5 (GSTM5) from Homo sapiens (Human).